The primary structure comprises 316 residues: CD-NTase-associated protein 12 (316 aa).

The region spanning 4-121 (RIFIGSSSEG…MLGITQTRYE (118 aa)) is the TIR domain. An STING domain region spans residues 161 to 316 (STVIAISYFE…ECVEIIEPQP (156 aa)). Residues F172, P237, and D253 each coordinate 3',3'-c-di-GMP.

This sequence in the C-terminal section; belongs to the bacterial STING family. Forms homodimers; in the presence of c-di-GMP forms filaments with an ordered array of parallel-stacked subunits.

The catalysed reaction is NAD(+) + H2O = ADP-D-ribose + nicotinamide + H(+). NAD(+) hydrolase activity is strongly stimulated by c-di-GMP, weakly by 3'3'-cGAMP, very weakly by c-di-AMP but not at all by 2'3'-cGAMP. Self-association of TIR domains is required for NADase activity. Effector protein of a CBASS antiviral system with NAD(+) hydrolase activity. CBASS (cyclic oligonucleotide-based antiphage signaling system) provides immunity against bacteriophage. The CD-NTase protein synthesizes cyclic nucleotides in response to infection; these serve as specific second messenger signals. The signals activate a diverse range of effectors, leading to bacterial cell death and thus abortive phage infection. A type I-D(GG) CBASS system. Functionally, binds c-di-GMP (synthesized by the cognate CdnE encoded upstream in the same operon) but not c-di-AMP, 2'-3'-cGAMP, 3'-3'-cGAMP or cUMP-AMP (tested without the N-terminal TIR domain). Upon activation by c-di-GMP forms filaments which hydrolyze NAD(+); filament formation is required for enzyme activation. The sequence is that of CD-NTase-associated protein 12 from Lachnospiraceae bacterium (strain RUG226).